A 200-amino-acid chain; its full sequence is Probable GTP-binding protein EngB (200 aa).

One can recognise an EngB-type G domain in the interval 26 to 200 (SIPEVALAGR…IYEIAQCIKK (175 aa)). GTP contacts are provided by residues 34–41 (GRSNVGKS), 61–65 (GCTRQ), 80–83 (DLPG), 147–150 (TKID), and 179–181 (VSS). Residues S41 and T63 each coordinate Mg(2+).

It belongs to the TRAFAC class TrmE-Era-EngA-EngB-Septin-like GTPase superfamily. EngB GTPase family. Mg(2+) is required as a cofactor.

In terms of biological role, necessary for normal cell division and for the maintenance of normal septation. The chain is Probable GTP-binding protein EngB from Ehrlichia ruminantium (strain Welgevonden).